Reading from the N-terminus, the 506-residue chain is ATP synthase subunit alpha (506 aa).

169–176 (GDRGTGKT) contacts ATP.

It belongs to the ATPase alpha/beta chains family. As to quaternary structure, F-type ATPases have 2 components, CF(1) - the catalytic core - and CF(0) - the membrane proton channel. CF(1) has five subunits: alpha(3), beta(3), gamma(1), delta(1), epsilon(1). CF(0) has three main subunits: a(1), b(2) and c(9-12). The alpha and beta chains form an alternating ring which encloses part of the gamma chain. CF(1) is attached to CF(0) by a central stalk formed by the gamma and epsilon chains, while a peripheral stalk is formed by the delta and b chains.

It localises to the cell membrane. It catalyses the reaction ATP + H2O + 4 H(+)(in) = ADP + phosphate + 5 H(+)(out). Produces ATP from ADP in the presence of a proton gradient across the membrane. The alpha chain is a regulatory subunit. The chain is ATP synthase subunit alpha from Symbiobacterium thermophilum (strain DSM 24528 / JCM 14929 / IAM 14863 / T).